The sequence spans 62 residues: Snaclec aspercetin subunit beta (62 aa).

A disulfide bridge links cysteine 2 with cysteine 13. Residues 9-62 (YEGHCYRVFKPPKDWADAERFCSQQAKGGHLVSIERFGREDFVSNLITKNLQRG) enclose the C-type lectin domain.

It belongs to the snaclec family. Heterodimer; disulfide-linked. In terms of tissue distribution, expressed by the venom gland.

It localises to the secreted. In terms of biological role, snaclec that binds to von Willebrand factor (VWF) and induces its interaction with GPIbalpha (GP1BA) (via the vWF A1 domain), resulting in platelet aggregation. Intramuscular and intravenous injections in mice induce a dose-dependent drop in platelet count (thrombocytopenia). Pretreatment by intravenous injection by this protein in mice potentiates the hemorrhagic lesion in the skin provoked by the metalloproteinase BaP1 intradermally injected. This result is not observed when both BaP1 and this protein are injected simultaneously. The protein is Snaclec aspercetin subunit beta of Bothrops asper (Terciopelo).